Reading from the N-terminus, the 273-residue chain is Glutamate racemase (273 aa).

Residues D10–S11 and Y42–G43 contribute to the substrate site. The active-site Proton donor/acceptor is the C73. N74–T75 provides a ligand contact to substrate. C184 (proton donor/acceptor) is an active-site residue. T185–H186 contributes to the substrate binding site.

This sequence belongs to the aspartate/glutamate racemases family.

The catalysed reaction is L-glutamate = D-glutamate. It functions in the pathway cell wall biogenesis; peptidoglycan biosynthesis. Its function is as follows. Provides the (R)-glutamate required for cell wall biosynthesis. This Desulforudis audaxviator (strain MP104C) protein is Glutamate racemase.